The following is a 549-amino-acid chain: Chaperonin GroEL (549 aa).

ATP is bound by residues 30-33, K51, 87-91, G415, and D495; these read TLGP and DGTTT.

The protein belongs to the chaperonin (HSP60) family. As to quaternary structure, forms a cylinder of 14 subunits composed of two heptameric rings stacked back-to-back. Interacts with the co-chaperonin GroES.

The protein resides in the cytoplasm. The enzyme catalyses ATP + H2O + a folded polypeptide = ADP + phosphate + an unfolded polypeptide.. Functionally, together with its co-chaperonin GroES, plays an essential role in assisting protein folding. The GroEL-GroES system forms a nano-cage that allows encapsulation of the non-native substrate proteins and provides a physical environment optimized to promote and accelerate protein folding. This Colwellia maris protein is Chaperonin GroEL.